Reading from the N-terminus, the 344-residue chain is Dihydroorotate dehydrogenase (quinone) (344 aa).

Residues A61–K65 and T85 contribute to the FMN site. Substrate is bound at residue K65. Residue N110–F114 participates in substrate binding. Positions 138 and 171 each coordinate FMN. N171 contacts substrate. The Nucleophile role is filled by S174. N176 serves as a coordination point for substrate. K216 and T244 together coordinate FMN. N245–T246 contributes to the substrate binding site. FMN is bound by residues G267, G296, and Y317 to S318.

The protein belongs to the dihydroorotate dehydrogenase family. Type 2 subfamily. As to quaternary structure, monomer. Requires FMN as cofactor.

The protein resides in the cell membrane. The enzyme catalyses (S)-dihydroorotate + a quinone = orotate + a quinol. Its pathway is pyrimidine metabolism; UMP biosynthesis via de novo pathway; orotate from (S)-dihydroorotate (quinone route): step 1/1. Functionally, catalyzes the conversion of dihydroorotate to orotate with quinone as electron acceptor. The protein is Dihydroorotate dehydrogenase (quinone) of Psychrobacter cryohalolentis (strain ATCC BAA-1226 / DSM 17306 / VKM B-2378 / K5).